Consider the following 513-residue polypeptide: Noroxomaritidine synthase 2 (513 aa).

A helical membrane pass occupies residues 14 to 34 (HYPEILIAIACFLIFSLLLSA). Cys458 is a binding site for heme.

The protein belongs to the cytochrome P450 family. Heme is required as a cofactor.

Its subcellular location is the membrane. It carries out the reaction 4'-O-methylnorbelladine + reduced [NADPH--hemoprotein reductase] + O2 = (10bR,4aS)-noroxomaritidine + oxidized [NADPH--hemoprotein reductase] + 2 H2O + H(+). The enzyme catalyses 4'-O-methylnorbelladine + reduced [NADPH--hemoprotein reductase] + O2 = (10bS,4aR)-noroxomaritidine + oxidized [NADPH--hemoprotein reductase] + 2 H2O + H(+). It participates in alkaloid biosynthesis. Its function is as follows. Cytochrome P450 that catalyzes an intramolecular para-para' C-C phenol coupling of 4'-O-methylnorbelladine in alkaloids biosynthesis, including haemanthamine- and crinamine-type alkaloids, promising anticancer agents. Catalyzes the formation of (10bR,4aS)-noroxomaritidine and (10bS,4aR)-noroxomaritidine from 4'-O-methylnorbelladine. The protein is Noroxomaritidine synthase 2 of Narcissus aff. pseudonarcissus MK-2014 (Daffodil).